The primary structure comprises 183 residues: Lipocalin (183 aa).

Residues 1–20 (MKGLVLSFALVALSALCVYG) form the signal peptide. Cysteines 83 and 179 form a disulfide.

This sequence belongs to the calycin superfamily. Lipocalin family. As to quaternary structure, monomer. Expressed mainly in choroid plexus. Much lower expression in other brain areas, and absent from liver.

It localises to the secreted. Its function is as follows. Might have a transport function across the blood brain barrier. Is supposed to have similar functions as a transthyretin which must have evolved after the stage of the amphibians in evolution. This chain is Lipocalin, found in Rhinella marina (Cane toad).